The primary structure comprises 188 residues: Small ribosomal subunit protein uS12m (188 aa).

The N-terminal 63 residues, 1–63 (MSGGRWISNL…AAFRLPQSSG (63 aa)), are a transit peptide targeting the mitochondrion.

This sequence belongs to the universal ribosomal protein uS12 family.

The protein resides in the mitochondrion. Functionally, protein S12 is involved in the translation initiation step. The protein is Small ribosomal subunit protein uS12m (RPS12) of Oenothera elata subsp. hookeri (Hooker's evening primrose).